A 325-amino-acid chain; its full sequence is ATP synthase gamma chain (325 aa).

The protein belongs to the ATPase gamma chain family. F-type ATPases have 2 components, CF(1) - the catalytic core - and CF(0) - the membrane proton channel. CF(1) has five subunits: alpha(3), beta(3), gamma(1), delta(1), epsilon(1). CF(0) has three main subunits: a, b and c.

The protein resides in the cell membrane. Its function is as follows. Produces ATP from ADP in the presence of a proton gradient across the membrane. The gamma chain is believed to be important in regulating ATPase activity and the flow of protons through the CF(0) complex. This is ATP synthase gamma chain from Corynebacterium glutamicum (strain ATCC 13032 / DSM 20300 / JCM 1318 / BCRC 11384 / CCUG 27702 / LMG 3730 / NBRC 12168 / NCIMB 10025 / NRRL B-2784 / 534).